Consider the following 246-residue polypeptide: Dihydroorotate dehydrogenase B (NAD(+)), electron transfer subunit (246 aa).

The FAD-binding FR-type domain maps to 3-95 (MEYFKGKVKE…IGPLGNGFDI (93 aa)). Residues 48–51 (RPIS) and 70–71 (GT) each bind FAD. Residues Cys-213, Cys-218, Cys-221, and Cys-233 each coordinate [2Fe-2S] cluster.

Belongs to the PyrK family. In terms of assembly, heterotetramer of 2 PyrK and 2 PyrD type B subunits. It depends on [2Fe-2S] cluster as a cofactor. Requires FAD as cofactor.

Its pathway is pyrimidine metabolism; UMP biosynthesis via de novo pathway; orotate from (S)-dihydroorotate (NAD(+) route): step 1/1. Responsible for channeling the electrons from the oxidation of dihydroorotate from the FMN redox center in the PyrD type B subunit to the ultimate electron acceptor NAD(+). The sequence is that of Dihydroorotate dehydrogenase B (NAD(+)), electron transfer subunit from Clostridium perfringens (strain 13 / Type A).